The chain runs to 102 residues: Putative pterin-4-alpha-carbinolamine dehydratase (102 aa).

Belongs to the pterin-4-alpha-carbinolamine dehydratase family.

The enzyme catalyses (4aS,6R)-4a-hydroxy-L-erythro-5,6,7,8-tetrahydrobiopterin = (6R)-L-erythro-6,7-dihydrobiopterin + H2O. This chain is Putative pterin-4-alpha-carbinolamine dehydratase, found in Psychromonas ingrahamii (strain DSM 17664 / CCUG 51855 / 37).